The chain runs to 1056 residues: MPKKSHIKKVLIIGSGPIQIGQAAEFDFSGSQACRALREEGVEVVLVNSNPATIQTDPDTADVIYIEPLKAELIAKIIAKEKPDGILSGMGGQTGLNMTAELAEMGALEGVEILGTPLEAIYRGEDREQFRDLMNAIGEPVPRSMILEHMNQIDEAIREVGLPAIIRPAYTLGGSGGGVAHTPEEMRRICELGLARSRIHQVLVEESVAGWKEIEFEVMRDAADTCIIVCGMENVDPMGIHTGESVVVAPILTLRDDEFQTLRTAAIKIIRALDVQGGCNIQFAYKDGDYRIIEVNPRVSRSSALASKATGYPIARVAAKIAIGLRLDEIMNTVTGVTPASFEPAIDYVVVKVPRWPFDKFKSADRTLTTAMKSTGEVMAIGRTVEEAFKKALRSLDNDMQQHTNPSEIRMILTSPTDERFGCLFDAFREGFTVREIAELTAITPFFLEKIKNIVDLERKLETDFEPEDVRVARRSGFSDEDLLALTKKTAGEIEALGGTPTYKMVDTCAAEFPATTPYFYSTWEEGCELVRDSAKKVLILGSGPIRIGQGIEFDYCTVHAVMALREEEGIEVHIVNNNPETVSTDADTSDRLFFEPMQLEDVMNILKKDDYYGVMVQFGGQNSVNLAVPLEAEIRRLDLPTKILGTSPDAMDAAEDRDRFSRLLTRLEIPSPANSSAYSEEEAREMAGEIGYPVLVRPSYVLGGRAMELVHDEAELESYIKEAVRVSRKHPVLIDSFLQNAVEIDVDAVSDGTDVLIGGIMEHIEWAGVHSGDSACVIPPQSLTPSVIARVRDYTKKIALGLGVVGLINIQYAVRNDVVYVLEANPRASRTVPFVAKATGIALAKIAAKVMVGRKLADMGVAEPEIEHVAVKEVLLPFNKLPGVDTVLGPEMKSTGEVMGIDYDFGRAYYKACTAADNTLPTTGNVFISVTDEQKEELLPVARKLRELGLSLYGTSGTVDFLTQNGVEANLVRKVQEGSPNVIDAMRSGSIRLIINTPADKASRQDHIQIMRAAVDYGIPYITTLQAARAAAMAIDAIKREEITIEPLGHYHGLM.

Residues 1–397 (MPKKSHIKKV…AFKKALRSLD (397 aa)) are carboxyphosphate synthetic domain. Residues R127, R167, G173, G174, E206, V208, E213, G239, I240, H241, Q282, and E294 each coordinate ATP. Residues 131-323 (RDLMNAIGEP…IARVAAKIAI (193 aa)) enclose the ATP-grasp 1 domain. Positions 282, 294, and 296 each coordinate Mg(2+). Mn(2+)-binding residues include Q282, E294, and N296. Residues 398 to 530 (NDMQQHTNPS…YSTWEEGCEL (133 aa)) are oligomerization domain. The carbamoyl phosphate synthetic domain stretch occupies residues 531–920 (VRDSAKKVLI…YKACTAADNT (390 aa)). An ATP-grasp 2 domain is found at 662-853 (SRLLTRLEIP…LAKIAAKVMV (192 aa)). Residues R698, S737, L739, E744, G769, V770, H771, S772, Q812, and E824 each contribute to the ATP site. Mg(2+) contacts are provided by Q812, E824, and N826. Residues Q812, E824, and N826 each contribute to the Mn(2+) site. The 138-residue stretch at 919–1056 (NTLPTTGNVF…EPLGHYHGLM (138 aa)) folds into the MGS-like domain. The interval 921–1056 (LPTTGNVFIS…EPLGHYHGLM (136 aa)) is allosteric domain.

The protein belongs to the CarB family. Composed of two chains; the small (or glutamine) chain promotes the hydrolysis of glutamine to ammonia, which is used by the large (or ammonia) chain to synthesize carbamoyl phosphate. Tetramer of heterodimers (alpha,beta)4. It depends on Mg(2+) as a cofactor. The cofactor is Mn(2+).

The catalysed reaction is hydrogencarbonate + L-glutamine + 2 ATP + H2O = carbamoyl phosphate + L-glutamate + 2 ADP + phosphate + 2 H(+). It carries out the reaction hydrogencarbonate + NH4(+) + 2 ATP = carbamoyl phosphate + 2 ADP + phosphate + 2 H(+). It participates in amino-acid biosynthesis; L-arginine biosynthesis; carbamoyl phosphate from bicarbonate: step 1/1. The protein operates within pyrimidine metabolism; UMP biosynthesis via de novo pathway; (S)-dihydroorotate from bicarbonate: step 1/3. In terms of biological role, large subunit of the glutamine-dependent carbamoyl phosphate synthetase (CPSase). CPSase catalyzes the formation of carbamoyl phosphate from the ammonia moiety of glutamine, carbonate, and phosphate donated by ATP, constituting the first step of 2 biosynthetic pathways, one leading to arginine and/or urea and the other to pyrimidine nucleotides. The large subunit (synthetase) binds the substrates ammonia (free or transferred from glutamine from the small subunit), hydrogencarbonate and ATP and carries out an ATP-coupled ligase reaction, activating hydrogencarbonate by forming carboxy phosphate which reacts with ammonia to form carbamoyl phosphate. The sequence is that of Carbamoyl phosphate synthase large chain from Methanoculleus marisnigri (strain ATCC 35101 / DSM 1498 / JR1).